The sequence spans 150 residues: 3-dehydroquinate dehydratase (150 aa).

Tyrosine 26 acts as the Proton acceptor in catalysis. Substrate-binding residues include asparagine 77, histidine 83, and aspartate 90. Histidine 103 serves as the catalytic Proton donor. Residues 104–105 (LS) and arginine 114 contribute to the substrate site.

This sequence belongs to the type-II 3-dehydroquinase family. As to quaternary structure, homododecamer.

It carries out the reaction 3-dehydroquinate = 3-dehydroshikimate + H2O. Its pathway is metabolic intermediate biosynthesis; chorismate biosynthesis; chorismate from D-erythrose 4-phosphate and phosphoenolpyruvate: step 3/7. In terms of biological role, catalyzes a trans-dehydration via an enolate intermediate. This is 3-dehydroquinate dehydratase from Yersinia pseudotuberculosis serotype O:1b (strain IP 31758).